We begin with the raw amino-acid sequence, 537 residues long: DELLA protein GAI (537 aa).

Positions 1 to 33 (MKRDHQEISGSGSNPAESSSIKGKLWEEDPDAG) are disordered. Residues 9–20 (SGSGSNPAESSS) are compositionally biased toward low complexity. The short motif at 37-41 (DELLA) is the DELLA motif element. The disordered stretch occupies residues 131–157 (KSDPGLEITRKRAKTESSSSSSSTTTR). The span at 147-156 (SSSSSSSTTT) shows a compositional bias: low complexity. A GRAS domain is found at 162 to 533 (IDSQEAGVRL…RPLIAHLGLA (372 aa)). The leucine repeat I (LRI) stretch occupies residues 169–223 (VRLVHTLMACAEAVQQDNLKLADALVKHIGLLASSQTGAMRKVATYFAEALARRI). The interval 241–306 (QIPFYETCPY…GGPPAFRLTG (66 aa)) is VHIID. Positions 272 to 276 (VHVID) match the VHIID motif. Residues 320 to 352 (QVGWKLAQLAERIGIEFEFRGFVANSLADLEPE) are leucine repeat II (LRII). Residues 364 to 454 (VAVNAVFELH…ELYLGRQICN (91 aa)) form a PFYRE region. Positions 372-376 (LHPLL) match the LXXLL motif motif. The segment at 457–533 (ACEGMDRVER…RPLIAHLGLA (77 aa)) is SAW.

This sequence belongs to the GRAS family. DELLA subfamily. Phosphorylated. In terms of processing, ubiquitinated. Upon GA application it is ubiquitinated, leading to its subsequent degradation.

The protein localises to the nucleus. Probable transcriptional regulator that acts as a repressor of the gibberellin (GA) signaling pathway. Probably acts by participating in large multiprotein complexes that represses transcription of GA-inducible genes. Upon GA application, it is degraded by the proteasome, allowing the GA signaling pathway. In Gossypium hirsutum (Upland cotton), this protein is DELLA protein GAI (GAI).